The primary structure comprises 151 residues: Protein SprT-like (151 aa).

The SprT-like domain occupies 6-147 (LQRMVENLSE…GHCNGKLRMK (142 aa)). A Zn(2+)-binding site is contributed by H67. E68 is a catalytic residue. H71 is a binding site for Zn(2+).

Belongs to the SprT family. It depends on Zn(2+) as a cofactor.

It is found in the cytoplasm. In Staphylococcus aureus (strain Mu3 / ATCC 700698), this protein is Protein SprT-like.